The following is a 216-amino-acid chain: MKEARKRMVKRAVQEIKDGMNVNLGIGMPTLVANEIPDGVHVMLQSENGLLGIGPYPLEGTEDADLINAGKETITEVTGASYFDSAESFAMIRGGHIDLAILGGMEVSEQGDLANWMIPGKMVKGMGGAMDLVNGAKRIVVIMEHVNKHGESKVKKTCSLPLTGQKVVHRLITDLAVFDFVNGRMTLTELQDGVTIEEVYEKTEADFAVSQSVLNS.

The active site involves glutamate 47.

It belongs to the 3-oxoacid CoA-transferase subunit B family. In terms of assembly, heterodimer of a subunit A and a subunit B.

It catalyses the reaction a 3-oxo acid + succinyl-CoA = a 3-oxoacyl-CoA + succinate. This is Probable succinyl-CoA:3-ketoacid coenzyme A transferase subunit B (scoB) from Bacillus subtilis (strain 168).